The primary structure comprises 476 residues: MANLHLLTVEILTAALGLGLLALGLLVPHSDRRGIAYVATAGLAGILAAAFGMREASGVVLGGYVIDPFGTYFKILFLVAAMLTAACSYDYVEKMGLNQGEYYALLVLATLGMMVLASSGELVSLYLGLELMTITFCILAAFHLGDAKSAEAGIKYVLLGAMSSAIFLYGLSLVYGSSGTTVIREIGQAVATRGASPALLLGTIFILAGFAFKVTAVPFHMWSPDVYEGAPTPVTGFLSVASKAAAFAALVRVFFGALPDLHSFWVQLFIALAVLTIVLGNLVAIPQTNIKRLLAYSSIAQAGYLLLGIVSFSVLGVGAVMYYAMLYVFGNMGAFMAATAFYNNDGSDEIKDYAGLARRSPLVAALMLFSLLSLAGIPPMAGFVGKFYLFMSIISRQYIWLAILGILMSMVSVYYYLLVAKAMYLGNPPEGSKPLRVAPGLQVAMVVSLLILFILGIYPTPLTNYAMNSAVTFFMP.

The next 13 membrane-spanning stretches (helical) occupy residues 7-27 (LTVE…GLLV), 33-53 (RGIA…AFGM), 59-79 (VVLG…LFLV), 100-120 (GEYY…ASSG), 122-142 (LVSL…LAAF), 156-176 (YVLL…LVYG), 199-219 (LLLG…AVPF), 237-257 (FLSV…FFGA), 265-285 (WVQL…LVAI), 305-325 (LLLG…YYAM), 363-383 (VAAL…MAGF), 399-419 (IWLA…YLLV), and 437-457 (VAPG…ILGI).

The protein belongs to the complex I subunit 2 family. In terms of assembly, NDH-1 is composed of 14 different subunits. Subunits NuoA, H, J, K, L, M, N constitute the membrane sector of the complex.

It localises to the cell membrane. It carries out the reaction a quinone + NADH + 5 H(+)(in) = a quinol + NAD(+) + 4 H(+)(out). NDH-1 shuttles electrons from NADH, via FMN and iron-sulfur (Fe-S) centers, to quinones in the respiratory chain. The immediate electron acceptor for the enzyme in this species is believed to be a menaquinone. Couples the redox reaction to proton translocation (for every two electrons transferred, four hydrogen ions are translocated across the cytoplasmic membrane), and thus conserves the redox energy in a proton gradient. The protein is NADH-quinone oxidoreductase subunit N of Moorella thermoacetica (strain ATCC 39073 / JCM 9320).